An 899-amino-acid chain; its full sequence is Tubulin glycylase 3F (899 aa).

Positions 471 to 835 constitute a TTL domain; that stretch reads FKDVIQIIKN…TEYYQIQNWK (365 aa). Residues 642–645, lysine 663, and aspartate 665 each bind ATP; that span reads QKYI.

It localises to the cytoplasm. The protein localises to the cytoskeleton. Its subcellular location is the cilium basal body. Its function is as follows. Probable glycylase which modifies tubulin, generating side chains of glycine on the gamma-carboxyl groups of specific glutamate residues within the C-terminal tail of tubulin. In Tetrahymena thermophila (strain SB210), this protein is Tubulin glycylase 3F (TTLL3F).